The following is a 505-amino-acid chain: ATP synthase subunit alpha (505 aa).

170 to 177 (GDRQTGKT) is an ATP binding site.

The protein belongs to the ATPase alpha/beta chains family. As to quaternary structure, F-type ATPases have 2 components, CF(1) - the catalytic core - and CF(0) - the membrane proton channel. CF(1) has five subunits: alpha(3), beta(3), gamma(1), delta(1), epsilon(1). CF(0) has four main subunits: a(1), b(1), b'(1) and c(9-12).

The protein localises to the cellular thylakoid membrane. The catalysed reaction is ATP + H2O + 4 H(+)(in) = ADP + phosphate + 5 H(+)(out). Produces ATP from ADP in the presence of a proton gradient across the membrane. The alpha chain is a regulatory subunit. The sequence is that of ATP synthase subunit alpha from Prochlorococcus marinus subsp. pastoris (strain CCMP1986 / NIES-2087 / MED4).